The sequence spans 279 residues: Shikimate dehydrogenase (NADP(+)) (279 aa).

Shikimate is bound by residues 16-18 (SRS) and T63. Catalysis depends on K67, which acts as the Proton acceptor. Shikimate is bound by residues N88 and D103. NADP(+)-binding positions include 128–132 (GAGGA) and M219. Y221 is a shikimate binding site. G243 is an NADP(+) binding site.

It belongs to the shikimate dehydrogenase family. Homodimer.

The enzyme catalyses shikimate + NADP(+) = 3-dehydroshikimate + NADPH + H(+). It functions in the pathway metabolic intermediate biosynthesis; chorismate biosynthesis; chorismate from D-erythrose 4-phosphate and phosphoenolpyruvate: step 4/7. Its function is as follows. Involved in the biosynthesis of the chorismate, which leads to the biosynthesis of aromatic amino acids. Catalyzes the reversible NADPH linked reduction of 3-dehydroshikimate (DHSA) to yield shikimate (SA). This Aromatoleum aromaticum (strain DSM 19018 / LMG 30748 / EbN1) (Azoarcus sp. (strain EbN1)) protein is Shikimate dehydrogenase (NADP(+)).